Reading from the N-terminus, the 196-residue chain is Cytochrome c biogenesis ATP-binding export protein CcmA (196 aa).

The ABC transporter domain occupies L2–L195. G34–T41 contributes to the ATP binding site.

Belongs to the ABC transporter superfamily. CcmA exporter (TC 3.A.1.107) family. As to quaternary structure, the complex is composed of two ATP-binding proteins (CcmA) and two transmembrane proteins (CcmB).

It is found in the cell inner membrane. The catalysed reaction is heme b(in) + ATP + H2O = heme b(out) + ADP + phosphate + H(+). Functionally, part of the ABC transporter complex CcmAB involved in the biogenesis of c-type cytochromes; once thought to export heme, this seems not to be the case, but its exact role is uncertain. Responsible for energy coupling to the transport system. The polypeptide is Cytochrome c biogenesis ATP-binding export protein CcmA (Rickettsia bellii (strain RML369-C)).